The sequence spans 383 residues: Queuine tRNA-ribosyltransferase (383 aa).

Aspartate 90 functions as the Proton acceptor in the catalytic mechanism. Substrate is bound by residues 90-94, aspartate 144, glutamine 193, and glycine 227; that span reads DSGGF. Residues 258–264 are RNA binding; sequence GVGTPED. Aspartate 277 acts as the Nucleophile in catalysis. The RNA binding; important for wobble base 34 recognition stretch occupies residues 282-286; that stretch reads TRNAR. Zn(2+) is bound by residues cysteine 315, cysteine 317, cysteine 320, and histidine 346.

Belongs to the queuine tRNA-ribosyltransferase family. Homodimer. Within each dimer, one monomer is responsible for RNA recognition and catalysis, while the other monomer binds to the replacement base PreQ1. It depends on Zn(2+) as a cofactor.

The enzyme catalyses 7-aminomethyl-7-carbaguanine + guanosine(34) in tRNA = 7-aminomethyl-7-carbaguanosine(34) in tRNA + guanine. Its pathway is tRNA modification; tRNA-queuosine biosynthesis. Functionally, catalyzes the base-exchange of a guanine (G) residue with the queuine precursor 7-aminomethyl-7-deazaguanine (PreQ1) at position 34 (anticodon wobble position) in tRNAs with GU(N) anticodons (tRNA-Asp, -Asn, -His and -Tyr). Catalysis occurs through a double-displacement mechanism. The nucleophile active site attacks the C1' of nucleotide 34 to detach the guanine base from the RNA, forming a covalent enzyme-RNA intermediate. The proton acceptor active site deprotonates the incoming PreQ1, allowing a nucleophilic attack on the C1' of the ribose to form the product. After dissociation, two additional enzymatic reactions on the tRNA convert PreQ1 to queuine (Q), resulting in the hypermodified nucleoside queuosine (7-(((4,5-cis-dihydroxy-2-cyclopenten-1-yl)amino)methyl)-7-deazaguanosine). This Ralstonia pickettii (strain 12J) protein is Queuine tRNA-ribosyltransferase.